The primary structure comprises 95 residues: Opiscorpine-4 (95 aa).

An N-terminal signal peptide occupies residues 1-19; the sequence is MNNKLTALIFLGLLAIASC. In terms of domain architecture, BetaSPN-type CS-alpha/beta spans 55 to 95; that stretch reads EFMCVANIDMTKSCDTHCQKASGEKGYCHGTKCKCGVPLSY. 3 cysteine pairs are disulfide-bonded: Cys58–Cys82, Cys68–Cys87, and Cys72–Cys89.

This sequence belongs to the long chain scorpion toxin family. Class 3 subfamily. In terms of tissue distribution, expressed by the venom gland.

The protein resides in the secreted. Functionally, has antimicrobial activity against yeasts and bacteria. This Opistophthalmus carinatus (African yellow leg scorpion) protein is Opiscorpine-4.